Here is a 173-residue protein sequence, read N- to C-terminus: Flagellar biosynthetic protein FliV (173 aa).

It belongs to the FliB family.

In terms of biological role, required for the secretion of flagellin and expression of motility. This is Flagellar biosynthetic protein FliV (fliV) from Salmonella muenchen.